The sequence spans 695 residues: Sodium-dependent phosphate transport protein 2B (695 aa).

Residues M1–P44 form a disordered region. The Cytoplasmic portion of the chain corresponds to M1 to K90. The chain crosses the membrane as a helical span at residues I91–F111. Residues V112–N136 lie on the Extracellular side of the membrane. The chain crosses the membrane as a helical span at residues N137–V157. Topologically, residues Q158 to A213 are cytoplasmic. Residues F214 to L234 form a helical membrane-spanning segment. Residues E235–A363 lie on the Extracellular side of the membrane. N295, N313, N321, N340, and N356 each carry an N-linked (GlcNAc...) asparagine glycan. C303 and C350 are joined by a disulfide. Residues V364 to V384 traverse the membrane as a helical segment. Residues K385–P408 lie on the Cytoplasmic side of the membrane. A helical membrane pass occupies residues F409–I429. Over V430–Q486 the chain is Extracellular. A helical membrane pass occupies residues I487 to F507. The Cytoplasmic portion of the chain corresponds to T508–R526. The helical transmembrane segment at W527 to L547 threads the bilayer. Topologically, residues S548–G551 are extracellular. Residues W552–L572 form a helical membrane-spanning segment. Topologically, residues R573–F695 are cytoplasmic.

The protein belongs to the SLC34A transporter family. As to expression, highly expressed in the lung, in type II alveolar cells. Moderately expressed in kidney followed by small intestine.

It is found in the apical cell membrane. The catalysed reaction is 3 Na(+)(out) + phosphate(out) = 3 Na(+)(in) + phosphate(in). Functionally, involved in actively transporting phosphate into cells via Na(+) cotransport. The sequence is that of Sodium-dependent phosphate transport protein 2B (Slc34a2) from Rattus norvegicus (Rat).